The chain runs to 267 residues: DNA repair protein RecO (267 aa).

Belongs to the RecO family.

Involved in DNA repair and RecF pathway recombination. The chain is DNA repair protein RecO from Prochlorococcus marinus (strain MIT 9313).